We begin with the raw amino-acid sequence, 364 residues long: Histidinol-phosphate aminotransferase (364 aa).

K226 is modified (N6-(pyridoxal phosphate)lysine).

It belongs to the class-II pyridoxal-phosphate-dependent aminotransferase family. Histidinol-phosphate aminotransferase subfamily. As to quaternary structure, homodimer. Requires pyridoxal 5'-phosphate as cofactor.

It catalyses the reaction L-histidinol phosphate + 2-oxoglutarate = 3-(imidazol-4-yl)-2-oxopropyl phosphate + L-glutamate. It participates in amino-acid biosynthesis; L-histidine biosynthesis; L-histidine from 5-phospho-alpha-D-ribose 1-diphosphate: step 7/9. The sequence is that of Histidinol-phosphate aminotransferase from Campylobacter jejuni (strain RM1221).